Here is a 440-residue protein sequence, read N- to C-terminus: Chromosomal replication initiator protein DnaA (440 aa).

Residues M1–I75 are domain I, interacts with DnaA modulators. Residues I75–T99 are domain II. A domain III, AAA+ region region spans residues I100–A316. The ATP site is built by G146, G148, K149, and T150. Residues T317–S440 are domain IV, binds dsDNA.

This sequence belongs to the DnaA family. In terms of assembly, oligomerizes as a right-handed, spiral filament on DNA at oriC.

It is found in the cytoplasm. Functionally, plays an essential role in the initiation and regulation of chromosomal replication. ATP-DnaA binds to the origin of replication (oriC) to initiate formation of the DNA replication initiation complex once per cell cycle. Binds the DnaA box (a 9 base pair repeat at the origin) and separates the double-stranded (ds)DNA. Forms a right-handed helical filament on oriC DNA; dsDNA binds to the exterior of the filament while single-stranded (ss)DNA is stabiized in the filament's interior. The ATP-DnaA-oriC complex binds and stabilizes one strand of the AT-rich DNA unwinding element (DUE), permitting loading of DNA polymerase. After initiation quickly degrades to an ADP-DnaA complex that is not apt for DNA replication. Binds acidic phospholipids. The chain is Chromosomal replication initiator protein DnaA from Campylobacter jejuni subsp. jejuni serotype O:6 (strain 81116 / NCTC 11828).